A 209-amino-acid chain; its full sequence is C-type lectin domain family 6 member A (209 aa).

Topologically, residues 1–20 (MVQERQSQGKGVCWTLRLWS) are cytoplasmic. Residues 21 to 43 (AAVISMLLLSTCFIASCVVTYQF) form a helical; Signal-anchor for type II membrane protein membrane-spanning segment. Topologically, residues 44–209 (IMDQPSRRLY…SICEMKKIYL (166 aa)) are extracellular. 4 cysteine pairs are disulfide-bonded: C64-C78, C79-C90, C107-C202, and C176-C194. The 118-residue stretch at 86–203 (FGSSCYLIST…CDSKHNSICE (118 aa)) folds into the C-type lectin domain. The Ca(2+) site is built by V116, N118, and E122. An N-linked (GlcNAc...) asparagine glycan is attached at N131. Ca(2+)-binding residues include E168, N170, and E174. Residues 168–170 (EPN), E174, W182, and 190–191 (ND) contribute to the alpha-D-mannopyranose site. Residues N190, D191, and E203 each coordinate Ca(2+).

As to quaternary structure, associated with FCER1G. Heterodimer with CLEC4D; this heterodimer forms a pattern recognition receptor (PRR) against fungal infection. Expressed by the XS52 DC (dendritic cell) line (at protein level). Expressed constitutively by the epidermis, and skin resident DC appear to be the major source of this expression. Expressed in the spleen and thymus. Expression was undetectable in non-DC lines, including macrophage lines (J774 and Raw), T-cell lines (7-17, HDK-1, and D10), B-cell hybridoma (5C5), a keratinocyte line (Pam 212), and a fibroblast line (NS01).

The protein localises to the cell membrane. Its function is as follows. Calcium-dependent lectin that acts as a pattern recognition receptor (PRR) of the innate immune system: specifically recognizes and binds alpha-mannans on C.albicans hypheas. Binding of C.albicans alpha-mannans to this receptor complex leads to phosphorylation of the immunoreceptor tyrosine-based activation motif (ITAM) of FCER1G, triggering activation of SYK, CARD9 and NF-kappa-B, consequently driving maturation of antigen-presenting cells and shaping antigen-specific priming of T-cells toward effector T-helper 1 and T-helper 17 cell subtypes. Also recognizes, in a mannose-dependent manner, allergens from house dust mite and fungi, by promoting cysteinyl leukotriene production. Recognizes soluble elements from the eggs of Shistosoma mansoni altering adaptive immune responses. This Mus musculus (Mouse) protein is C-type lectin domain family 6 member A.